Here is a 260-residue protein sequence, read N- to C-terminus: Thiazole synthase (260 aa).

K96 functions as the Schiff-base intermediate with DXP in the catalytic mechanism. Residues G157, 184–185, and 206–207 contribute to the 1-deoxy-D-xylulose 5-phosphate site; these read AG and NT.

This sequence belongs to the ThiG family. As to quaternary structure, homotetramer. Forms heterodimers with either ThiH or ThiS.

It is found in the cytoplasm. The catalysed reaction is [ThiS sulfur-carrier protein]-C-terminal-Gly-aminoethanethioate + 2-iminoacetate + 1-deoxy-D-xylulose 5-phosphate = [ThiS sulfur-carrier protein]-C-terminal Gly-Gly + 2-[(2R,5Z)-2-carboxy-4-methylthiazol-5(2H)-ylidene]ethyl phosphate + 2 H2O + H(+). Its pathway is cofactor biosynthesis; thiamine diphosphate biosynthesis. Its function is as follows. Catalyzes the rearrangement of 1-deoxy-D-xylulose 5-phosphate (DXP) to produce the thiazole phosphate moiety of thiamine. Sulfur is provided by the thiocarboxylate moiety of the carrier protein ThiS. In vitro, sulfur can be provided by H(2)S. This chain is Thiazole synthase, found in Rhodopseudomonas palustris (strain ATCC BAA-98 / CGA009).